We begin with the raw amino-acid sequence, 365 residues long: TD and POZ domain-containing protein 1-like (365 aa).

The 131-residue stretch at 19-149 (KFCYKWTISN…EDQLTICCKV (131 aa)) folds into the MATH domain. Positions 188–255 (TDCCLLVAGH…IYTGKAPYLH (68 aa)) constitute a BTB domain.

The protein belongs to the Tdpoz family.

The protein is TD and POZ domain-containing protein 1-like of Mus musculus (Mouse).